A 243-amino-acid polypeptide reads, in one-letter code: Pleckstrin homology domain-containing family B member 1 (243 aa).

A PH domain is found at 21-128; it reads ALVRGGWLWR…WKTALMEANS (108 aa).

Binds transducins. Homodimer. Interacts (via PH domain) with MYO1C. Interacts (via PH domain) with MYO7A. In terms of tissue distribution, highly expressed in retina and brain. In retina, abundantly expressed in photoreceptors. Isoform 4 is the predominant isoform expressed in mature olfactory receptor neurons and vestibular and cochlear hair cells. Also expressed in cells with possible sensory function, including peripheral retinal ganglion cells, cochlear interdental cells, and neurons of the circumventricular organ (at protein level).

It is found in the membrane. The protein resides in the cytoplasm. The sequence is that of Pleckstrin homology domain-containing family B member 1 (Plekhb1) from Mus musculus (Mouse).